A 97-amino-acid chain; its full sequence is UPF0235 protein DET1292 (97 aa).

The protein belongs to the UPF0235 family.

The chain is UPF0235 protein DET1292 from Dehalococcoides mccartyi (strain ATCC BAA-2266 / KCTC 15142 / 195) (Dehalococcoides ethenogenes (strain 195)).